Consider the following 438-residue polypeptide: Elongation factor 1-alpha (438 aa).

In terms of domain architecture, tr-type G spans lysine 6–lysine 229. The interval glycine 15–serine 22 is G1. A GTP-binding site is contributed by glycine 15–serine 22. Serine 22 is a Mg(2+) binding site. A G2 region spans residues glycine 71 to serine 75. Positions aspartate 92 to glycine 95 are G3. GTP is bound by residues aspartate 92–histidine 96 and asparagine 154–aspartate 157. Residues asparagine 154–aspartate 157 form a G4 region. The segment at serine 195–tryptophan 197 is G5.

This sequence belongs to the TRAFAC class translation factor GTPase superfamily. Classic translation factor GTPase family. EF-Tu/EF-1A subfamily.

It localises to the cytoplasm. It carries out the reaction GTP + H2O = GDP + phosphate + H(+). GTP hydrolase that promotes the GTP-dependent binding of aminoacyl-tRNA to the A-site of ribosomes during protein biosynthesis. This is Elongation factor 1-alpha from Desulfurococcus mucosus (Desulfurococcus mobilis).